The primary structure comprises 279 residues: Bis(5'-nucleosyl)-tetraphosphatase, symmetrical (279 aa).

Belongs to the Ap4A hydrolase family.

It catalyses the reaction P(1),P(4)-bis(5'-adenosyl) tetraphosphate + H2O = 2 ADP + 2 H(+). In terms of biological role, hydrolyzes diadenosine 5',5'''-P1,P4-tetraphosphate to yield ADP. This chain is Bis(5'-nucleosyl)-tetraphosphatase, symmetrical, found in Edwardsiella ictaluri (strain 93-146).